A 255-amino-acid polypeptide reads, in one-letter code: MNPPHSIDLNSDLGESYGSWVMGNDEAVLDLVSSANIACGFHAGDATVLLKTVVAAKARNVRIGAHIGYNDLTGFGRRAMEYDHEVLVAETIYQIGAIQAAATTVGATVDYVKPHGALYNRIAVDEAQAAAVIEAMKKLNPELPLMVLSGAPIVEQAISEGLTVIQETFADRAYTSDGRLVSRTQTGAVHHDPQVAARQALAFATGGSITSIDGDPVTVHADSICVHGDNPAALELVRTIIDTLRAHDVEVRRAR.

This sequence belongs to the LamB/PxpA family. Forms a complex composed of PxpA, PxpB and PxpC.

It catalyses the reaction 5-oxo-L-proline + ATP + 2 H2O = L-glutamate + ADP + phosphate + H(+). Catalyzes the cleavage of 5-oxoproline to form L-glutamate coupled to the hydrolysis of ATP to ADP and inorganic phosphate. This is 5-oxoprolinase subunit A from Corynebacterium efficiens (strain DSM 44549 / YS-314 / AJ 12310 / JCM 11189 / NBRC 100395).